Reading from the N-terminus, the 397-residue chain is S-adenosylmethionine synthase (397 aa).

His-17 is a binding site for ATP. Residue Asp-19 coordinates Mg(2+). Glu-45 contacts K(+). L-methionine is bound by residues Glu-58 and Gln-101. Residues 101–111 (QSPDIAQGVDK) form a flexible loop region. Residues 176–178 (DGK), 243–244 (RF), Asp-252, 258–259 (RK), and Lys-279 each bind ATP. An L-methionine-binding site is contributed by Asp-252. Lys-283 lines the L-methionine pocket.

The protein belongs to the AdoMet synthase family. Homotetramer; dimer of dimers. Requires Mg(2+) as cofactor. K(+) is required as a cofactor.

It is found in the cytoplasm. The catalysed reaction is L-methionine + ATP + H2O = S-adenosyl-L-methionine + phosphate + diphosphate. It participates in amino-acid biosynthesis; S-adenosyl-L-methionine biosynthesis; S-adenosyl-L-methionine from L-methionine: step 1/1. Functionally, catalyzes the formation of S-adenosylmethionine (AdoMet) from methionine and ATP. The overall synthetic reaction is composed of two sequential steps, AdoMet formation and the subsequent tripolyphosphate hydrolysis which occurs prior to release of AdoMet from the enzyme. The protein is S-adenosylmethionine synthase of Staphylococcus aureus.